Here is a 176-residue protein sequence, read N- to C-terminus: MSVNMDELKHQVMINQFVLTAGCAADQAKQLLQAAHWQFETALSAFFQETNIPYSHHHQMMCTPANTPATPPNFPDALTMFSRLKASESFHSGGSSGSPMATSATSPPPHFPHATGSFATPSWPTAASPPGGPQHLQPQPPLWTPAPPSPTSDWPPLAPQQATSEPRAHPAMEAER.

2 stretches are compositionally biased toward low complexity: residues 88 to 105 (ESFH…TSAT) and 120 to 137 (TPSW…QHLQ). The disordered stretch occupies residues 88 to 176 (ESFHSGGSSG…RAHPAMEAER (89 aa)). Residues 138-150 (PQPPLWTPAPPSP) are compositionally biased toward pro residues. The segment covering 166–176 (PRAHPAMEAER) has biased composition (basic and acidic residues).

Belongs to the UBALD family.

In Rattus norvegicus (Rat), this protein is UBA-like domain-containing protein 1 (Ubald1).